A 330-amino-acid chain; its full sequence is ADP-L-glycero-D-manno-heptose-6-epimerase (330 aa).

NADP(+) contacts are provided by residues F11 to I12, D32 to N33, K39, K54, E75 to S79, and N92. Y139 acts as the Proton acceptor in catalysis. K143 serves as a coordination point for NADP(+). N168 is a substrate binding site. 2 residues coordinate NADP(+): V169 and K177. Residue K177 is the Proton acceptor of the active site. Residues R179, H186, F200 to Y203, R213, and Y292 contribute to the substrate site.

This sequence belongs to the NAD(P)-dependent epimerase/dehydratase family. HldD subfamily. Homopentamer. NADP(+) serves as cofactor.

It catalyses the reaction ADP-D-glycero-beta-D-manno-heptose = ADP-L-glycero-beta-D-manno-heptose. It functions in the pathway nucleotide-sugar biosynthesis; ADP-L-glycero-beta-D-manno-heptose biosynthesis; ADP-L-glycero-beta-D-manno-heptose from D-glycero-beta-D-manno-heptose 7-phosphate: step 4/4. In terms of biological role, catalyzes the interconversion between ADP-D-glycero-beta-D-manno-heptose and ADP-L-glycero-beta-D-manno-heptose via an epimerization at carbon 6 of the heptose. This chain is ADP-L-glycero-D-manno-heptose-6-epimerase, found in Burkholderia cenocepacia (strain HI2424).